The chain runs to 205 residues: MNFDYNKLLERASGVLSSKTKNESRLKIPEPDVIYEGKSTIIRNFIDITEMMNRDPEDVIKYLTKEFGIGAVLSGQRLIINRKVSEDEIQSKMNEYMATYVICYECKSPDTEIQKIGRTYLLVCKACGAQHPIRSNREIIENSNGIEIGKEYTVTIESTGSAGEGIARYQGYTIYVPKAKKGERVKIIIRKIKRNVAIAELADKK.

The 59-residue stretch at 145–203 folds into the TRAM domain; sequence GIEIGKEYTVTIESTGSAGEGIARYQGYTIYVPKAKKGERVKIIIRKIKRNVAIAELAD.

It belongs to the eIF-2-beta/eIF-5 family. In terms of assembly, heterotrimer composed of an alpha, a beta and a gamma chain.

Functionally, eIF-2 functions in the early steps of protein synthesis by forming a ternary complex with GTP and initiator tRNA. In Picrophilus torridus (strain ATCC 700027 / DSM 9790 / JCM 10055 / NBRC 100828 / KAW 2/3), this protein is Translation initiation factor 2 subunit beta.